Reading from the N-terminus, the 504-residue chain is Glutamate--tRNA ligase (504 aa).

A 'HIGH' region motif is present at residues 25–35; that stretch reads PSPTGNPHVGL. 4 residues coordinate Zn(2+): Cys122, Cys124, Cys149, and Glu151. Positions 270–274 match the 'KMSKS' region motif; the sequence is KLSKR. Lys273 contributes to the ATP binding site.

The protein belongs to the class-I aminoacyl-tRNA synthetase family. Glutamate--tRNA ligase type 1 subfamily. Monomer. Requires Zn(2+) as cofactor.

Its subcellular location is the cytoplasm. It catalyses the reaction tRNA(Glu) + L-glutamate + ATP = L-glutamyl-tRNA(Glu) + AMP + diphosphate. Functionally, catalyzes the attachment of glutamate to tRNA(Glu) in a two-step reaction: glutamate is first activated by ATP to form Glu-AMP and then transferred to the acceptor end of tRNA(Glu). The protein is Glutamate--tRNA ligase of Streptomyces avermitilis (strain ATCC 31267 / DSM 46492 / JCM 5070 / NBRC 14893 / NCIMB 12804 / NRRL 8165 / MA-4680).